Reading from the N-terminus, the 369-residue chain is Ferredoxin--NADP reductase 2 (369 aa).

The interval 1-21 (MDLSIPNPVADATRQVEGGSP) is disordered. The FAD site is built by aspartate 58, glutamine 66, tyrosine 71, valine 111, phenylalanine 146, aspartate 311, and threonine 352.

This sequence belongs to the ferredoxin--NADP reductase type 2 family. Homodimer. FAD serves as cofactor.

The enzyme catalyses 2 reduced [2Fe-2S]-[ferredoxin] + NADP(+) + H(+) = 2 oxidized [2Fe-2S]-[ferredoxin] + NADPH. This chain is Ferredoxin--NADP reductase 2, found in Cupriavidus taiwanensis (strain DSM 17343 / BCRC 17206 / CCUG 44338 / CIP 107171 / LMG 19424 / R1) (Ralstonia taiwanensis (strain LMG 19424)).